The chain runs to 2171 residues: Voltage-dependent L-type calcium channel subunit alpha-1C (2171 aa).

Residues 1-154 (MLRALVQPAT…RACISIVEWK (154 aa)) are Cytoplasmic-facing. Residues 77 to 98 (GAALSWQAAIDAARQAKLMGSA) form a calmodulin-binding region. The segment at 103–128 (ISTVSSTQRKRQQYGKPKKQGSTTAT) is disordered. A compositionally biased stretch (basic residues) spans 110 to 121 (QRKRQQYGKPKK). Residues 141-438 (NPIRRACISI…LVLGVLSGEF (298 aa)) form an I repeat. The helical transmembrane segment at 155-173 (PFEIIILLTIFANCVALAI) threads the bilayer. Topologically, residues 174 to 188 (YIPFPEDDSNATNSN) are extracellular. N-linked (GlcNAc...) asparagine glycosylation occurs at Asn183. Residues 189–209 (LERVEYLFLIIFTVEAFLKVI) form a helical membrane-spanning segment. The Cytoplasmic segment spans residues 210 to 218 (AYGLLFHPN). Residues 219–239 (AYLRNGWNLLDFIIVVVGLFS) traverse the membrane as a helical segment. At 240–262 (AILEQATKADGANALGGKGAGFD) the chain is on the extracellular side. A helical transmembrane segment spans residues 263-281 (VKALRAFRVLRPLRLVSGV). At 282 to 298 (PSLQVVLNSIIKAMVPL) the chain is on the cytoplasmic side. The chain crosses the membrane as a helical span at residues 299–320 (LHIALLVLFVIIIYAIIGLELF). Topologically, residues 321–380 (MGKMHKTCYNQEGVADVPAEDDPSPCALETGHGRQCQNGTVCKPGWDGPKHGITNFDNFA) are extracellular. Cystine bridges form between Cys328/Cys356 and Cys346/Cys362. Asn358 carries an N-linked (GlcNAc...) asparagine glycan. The segment at residues 381–402 (FAMLTVFQCITMEGWTDVLYWM) is an intramembrane region (pore-forming). Positions 391–394 (TMEG) match the Selectivity filter of repeat I motif. Glu393 contacts Ca(2+). Residues 403-410 (QDAMGYEL) lie on the Extracellular side of the membrane. A helical transmembrane segment spans residues 411–431 (PWVYFVSLVIFGSFFVLNLVL). Residues 432–554 (GVLSGEFSKE…RKCRAAVKSN (123 aa)) lie on the Cytoplasmic side of the membrane. Residues 458–475 (QQLEEDLKGYLDWITQAE) are AID/alpha-interaction domain; mediates interaction with the beta subunit. The segment at 479–511 (PENEDEGMDEEKPRNMSMPTSETESVNTENVAG) is disordered. Over residues 495-508 (SMPTSETESVNTEN) the composition is skewed to polar residues. Ser499 carries the post-translational modification Phosphoserine. At Thr506 the chain carries Phosphothreonine. An II repeat occupies 540-786 (NRFCRRKCRA…VFLAIAVDNL (247 aa)). The chain crosses the membrane as a helical span at residues 555–573 (VFYWLVIFLVFLNTLTIAS). Over 574–584 (EHYNQPHWLTE) the chain is Extracellular. The chain crosses the membrane as a helical span at residues 585–605 (VQDTANKALLALFTAEMLLKM). At 606 to 616 (YSLGLQAYFVS) the chain is on the cytoplasmic side. Residues 617-636 (LFNRFDCFIVCGGILETILV) traverse the membrane as a helical segment. The Extracellular segment spans residues 637–645 (ETKVMSPLG). A helical transmembrane segment spans residues 646–664 (ISVLRCVRLLRIFKITRYW). Topologically, residues 665 to 683 (NSLSNLVASLLNSVRSIAS) are cytoplasmic. Residues 684–703 (LLLLLFLFIIIFSLLGMQLF) form a helical membrane-spanning segment. The Extracellular portion of the chain corresponds to 704–723 (GGKFNFDEMQTRRSTFDNFP). Positions 724–745 (QSLLTVFQILTGEDWNSVMYDG) form an intramembrane region, pore-forming. The Selectivity filter of repeat II motif lies at 734–737 (TGED). Glu736 contacts Ca(2+). The Extracellular portion of the chain corresponds to 746 to 755 (IMAYGGPSFP). A helical transmembrane segment spans residues 756–775 (GMLVCIYFIILFICGNYILL). The Cytoplasmic segment spans residues 776–930 (NVFLAIAVDN…LQCHRIVNDT (155 aa)). A disordered region spans residues 794-891 (SAQKEEEEEK…EMPVGPRPRP (98 aa)). Basic and acidic residues predominate over residues 813–836 (SPEKKQEVVGKPALEEAKEEKIEL). A phosphoserine mark is found at Ser838 and Ser845. The interval 859 to 906 (NESEDKSPYPNPETTGEEDEEEPEMPVGPRPRPLSELHLKEKAVPMPE) is interaction with STAC2. Over residues 873–882 (TGEEDEEEPE) the composition is skewed to acidic residues. One copy of the III repeat lies at 917-1199 (NRFRLQCHRI…IFVGFVIVTF (283 aa)). The chain crosses the membrane as a helical span at residues 931-949 (IFTNLILFFILLSSISLAA). At 950 to 961 (EDPVQHTSFRNH) the chain is on the extracellular side. The helical transmembrane segment at 962 to 981 (ILFYFDIVFTTIFTIEIALK) threads the bilayer. Residues 982–997 (MTAYGAFLHKGSFCRN) are Cytoplasmic-facing. Residues 998-1016 (YFNILDLLVVSVSLISFGI) traverse the membrane as a helical segment. The Extracellular segment spans residues 1017–1023 (QSSAINV). A helical transmembrane segment spans residues 1024–1042 (VKILRVLRVLRPLRAINRA). Residues 1043-1061 (KGLKHVVQCVFVAIRTIGN) are Cytoplasmic-facing. Residues 1062–1081 (IVIVTTLLQFMFACIGVQLF) traverse the membrane as a helical segment. At 1082-1131 (KGKLYTCSDSSKQTEAECKGNYITYKDGEVDHPIIQPRSWENSKFDFDNV) the chain is on the extracellular side. Cys1088 and Cys1099 form a disulfide bridge. Positions 1119-1208 (RSWENSKFDF…FQEQGEQEYK (90 aa)) are dihydropyridine binding. Positions 1132 to 1152 (LAAMMALFTVSTFEGWPELLY) form an intramembrane region, pore-forming. Positions 1143–1146 (TFEG) match the Selectivity filter of repeat III motif. Glu1145 is a Ca(2+) binding site. Topologically, residues 1153 to 1169 (RSIDSHTEDKGPIYNYR) are extracellular. A helical transmembrane segment spans residues 1170–1191 (VEISIFFIIYIIIIAFFMMNIF). Topologically, residues 1192–1249 (VGFVIVTFQEQGEQEYKNCELDKNQRQCVEYALKARPLRRYIPKNQHQYKVWYVVNST) are cytoplasmic. The stretch at 1236–1509 (NQHQYKVWYV…LFVAVIMDNF (274 aa)) is one IV repeat. The chain crosses the membrane as a helical span at residues 1250–1271 (YFEYLMFVLILLNTICLAMQHY). Residues 1272 to 1279 (GQSCLFKI) lie on the Extracellular side of the membrane. A helical transmembrane segment spans residues 1280–1301 (AMNILNMLFTGLFTVEMILKLI). The Cytoplasmic segment spans residues 1302 to 1311 (AFKPKGYFSD). Residues 1312-1331 (PWNVFDFLIVIGSIIDVILS) traverse the membrane as a helical segment. Topologically, residues 1332–1354 (ETNPAEHTQCSPSMNAEENSRIS) are extracellular. A helical membrane pass occupies residues 1355 to 1373 (ITFFRLFRVMRLVKLLSRG). At 1374 to 1391 (EGIRTLLWTFIKSFQALP) the chain is on the cytoplasmic side. Residues 1392 to 1412 (YVALLIVMLFFIYAVIGMQVF) traverse the membrane as a helical segment. Residues 1413 to 1434 (GKIALNDTTEINRNNNFQTFPQ) lie on the Extracellular side of the membrane. N-linked (GlcNAc...) asparagine glycosylation occurs at Asn1418. Positions 1435–1453 (AVLLLFRCATGEAWQDIML) form an intramembrane region, pore-forming. Positions 1444–1447 (TGEA) match the Selectivity filter of repeat IV motif. Residues 1454–1481 (ACMPGKKCAPESEPHNSTEGETPCGSSF) are Extracellular-facing. The interval 1460–1528 (KCAPESEPHN…LGPHHLDEFK (69 aa)) is dihydropyridine binding. An intrachain disulfide couples Cys1461 to Cys1477. Residue Asn1469 is glycosylated (N-linked (GlcNAc...) asparagine). A phenylalkylamine binding region spans residues 1474–1516 (ETPCGSSFAVFYFISFYMLCAFLIINLFVAVIMDNFDYLTRDW). A helical membrane pass occupies residues 1482-1506 (AVFYFISFYMLCAFLIINLFVAVIM). Topologically, residues 1507–2171 (DNFDYLTRDW…ADRRAGVSSL (665 aa)) are cytoplasmic. The tract at residues 1641–1668 (DEVTVGKFYATFLIQEYFRKFKKRKEQG) is important for interaction with STAC1, STAC2 and STAC3. The segment at 1647-1667 (KFYATFLIQEYFRKFKKRKEQ) is calmodulin-binding IQ region. Residues 1681–1700 (LQAGLRTLHDIGPEIRRAIS) are important for localization in at the junctional membrane. Ser1700 and Ser1721 each carry phosphoserine. Residues 1760–1797 (ISKAGNNQGDTESPSHEKLVDSTFTPSSYSSTGSNANI) are disordered. Positions 1781-1793 (STFTPSSYSSTGS) are enriched in polar residues. Phosphoserine; by PKA is present on Ser1928. 3 disordered regions span residues 1971–2014 (RSHS…EKLN), 2026–2060 (SGEN…GRQF), and 2114–2155 (SGGA…PGCG). Residues 2130–2140 (NRRDPGRDRAG) are compositionally biased toward basic and acidic residues.

The protein belongs to the calcium channel alpha-1 subunit (TC 1.A.1.11) family. CACNA1C subfamily. Component of a calcium channel complex consisting of a pore-forming alpha subunit (CACNA1C) and ancillary beta, gamma and delta subunits. The channel complex contains alpha, beta, gamma and delta subunits in a 1:1:1:1 ratio, i.e. it contains only one of each type of subunit. CACNA1C channel activity is modulated by ancillary subunits, such as CACNB1, CACNB2, CACNB3, CACNA2D1 and CACNA2D4. Interacts with CACNB1. Interacts with CACNB2. Identified in a complex with CACNA2D4 and CACNB3. Interacts with CACNB3. Interacts with CACNA2D1. Interacts with the gamma subunits CACNG4, CACNG6, CACNG7 and CACNG8. Interacts with CACNA2D4. Interacts with CALM1. Interacts (via the N-terminus and the C-terminal C and IQ motifs) with CABP1; this inhibits Ca(2+)-dependent channel inactivation. The binding via the C motif is calcium independent whereas the binding via IQ requires the presence of calcium and is mutually exclusive with calmodulin binding. The binding to the cytoplasmic N-terminal domain is calcium independent but is essential for the channel modulation. Interacts (via C-terminal CDB motif) with CABP5; in a calcium-dependent manner. Interacts with CIB1; the interaction increases upon cardiomyocytes hypertrophy. Interacts with STAC1, STAC2 and STAC3; this inhibits channel inactivation, probably by hindering CALM1 binding. Phosphorylation by PKA at Ser-1928 activates the channel. Elevated levels of blood glucose lead to increased phosphorylation by PKA. As to expression, expression in cardiac muscle. In lung, expressed in airway and vascular smooth muscle cells.

The protein localises to the cell membrane. The protein resides in the sarcolemma. It is found in the perikaryon. It localises to the postsynaptic density membrane. Its subcellular location is the cell projection. The protein localises to the dendrite. The protein resides in the T-tubule. It carries out the reaction Ca(2+)(in) = Ca(2+)(out). Inhibited by dihydropyridines (DHP), such as isradipine. Inhibited by nifedipine. Channel activity is regulated by Ca(2+) and calmodulin. Binding of STAC1, STAC2 or STAC3 to a region that overlaps with the calmodulin binding site inhibits channel inactivation by Ca(2+) and calmodulin. Binding of calmodulin or CABP1 at the same regulatory sites results in opposite effects on the channel function. Shear stress and pressure increases calcium channel activity. Pore-forming, alpha-1C subunit of the voltage-gated calcium channel that gives rise to L-type calcium currents. Mediates influx of calcium ions into the cytoplasm, and thereby triggers calcium release from the sarcoplasm. Plays an important role in excitation-contraction coupling in the heart. Required for normal heart development and normal regulation of heart rhythm. Required for normal contraction of smooth muscle cells in blood vessels and in the intestine. Essential for normal blood pressure regulation via its role in the contraction of arterial smooth muscle cells. Long-lasting (L-type) calcium channels belong to the 'high-voltage activated' (HVA) group. The protein is Voltage-dependent L-type calcium channel subunit alpha-1C (CACNA1C) of Oryctolagus cuniculus (Rabbit).